Reading from the N-terminus, the 49-residue chain is Multidrug efflux pump accessory protein AcrZ (49 aa).

The Periplasmic segment spans residues 1–7 (MLELLKS). Residues 8 to 28 (LVFAVIMVPVVMAIILGLIYG) traverse the membrane as a helical segment. Residues 29-49 (LGEVFNIFSGVGKKDQPGQNH) are Cytoplasmic-facing.

It belongs to the AcrZ family. As to quaternary structure, part of the AcrA-AcrB-AcrZ-TolC efflux pump, interacts directly with AcrB.

Its subcellular location is the cell inner membrane. Functionally, acrA-AcrB-AcrZ-TolC is a drug efflux protein complex with a broad substrate specificity. This protein binds to AcrB and is required for efflux of some but not all substrates, suggesting it may influence the specificity of drug export. This Escherichia coli O157:H7 protein is Multidrug efflux pump accessory protein AcrZ.